Here is a 358-residue protein sequence, read N- to C-terminus: ATP synthase gamma chain, chloroplastic (358 aa).

A chloroplast-targeting transit peptide spans 1–35 (MAAMLASKQGAFMGRSSFAPAPKGVASRGSLQVVA). Cysteine 123 is a catalytic residue. Cysteine 233 and cysteine 239 are joined by a disulfide.

The protein belongs to the ATPase gamma chain family. As to quaternary structure, F-type ATPases have 2 components, F(1) - the catalytic core - and F(0) - the membrane proton channel. F(1) has five subunits: alpha(3), beta(3), gamma(1), delta(1), epsilon(1). F(0) has four main subunits: a(1), b(1), b'(1) and c(10-14). The alpha and beta chains form an alternating ring which encloses part of the gamma chain. F(1) is attached to F(0) by a central stalk formed by the gamma and epsilon chains, while a peripheral stalk is formed by the delta, b and b' chains.

It is found in the plastid. Its subcellular location is the chloroplast thylakoid membrane. In terms of biological role, f(1)F(0) ATP synthase produces ATP from ADP in the presence of a proton or sodium gradient. F-type ATPases consist of two structural domains, F(1) containing the extramembraneous catalytic core and F(0) containing the membrane proton channel, linked together by a central stalk and a peripheral stalk. During catalysis, ATP synthesis in the catalytic domain of F(1) is coupled via a rotary mechanism of the central stalk subunits to proton translocation. Produces ATP from ADP in the presence of a proton gradient across the membrane. The gamma chain is believed to be important in regulating ATPase activity and the flow of protons through the CF(0) complex. This is ATP synthase gamma chain, chloroplastic from Chlamydomonas reinhardtii (Chlamydomonas smithii).